A 570-amino-acid polypeptide reads, in one-letter code: Hydroxylamine reductase (570 aa).

4 residues coordinate [4Fe-4S] cluster: Cys-5, Cys-8, Cys-17, and Cys-23. Positions 266, 290, 334, 425, 453, 478, 513, and 515 each coordinate hybrid [4Fe-2O-2S] cluster. The residue at position 425 (Cys-425) is a Cysteine persulfide.

It belongs to the HCP family. [4Fe-4S] cluster serves as cofactor. Hybrid [4Fe-2O-2S] cluster is required as a cofactor.

Its subcellular location is the cytoplasm. It catalyses the reaction A + NH4(+) + H2O = hydroxylamine + AH2 + H(+). In terms of biological role, catalyzes the reduction of hydroxylamine to form NH(3) and H(2)O. This chain is Hydroxylamine reductase, found in Clostridium botulinum (strain Langeland / NCTC 10281 / Type F).